A 70-amino-acid chain; its full sequence is MFTTKKSMLLLFFLGTINLSLCEEERNAEEERRDEPDEMNVEVEKRFLPLIAGLAANFLPKIFCAITKKC.

The first 22 residues, methionine 1–cysteine 22, serve as a signal peptide directing secretion. The propeptide occupies glutamate 23–glutamate 44. Cysteine 64 and cysteine 70 are joined by a disulfide.

Expressed by the skin glands.

It is found in the secreted. Antimicrobial activity against the Gram-negative bacterium E.coli, the Gram-positive bacterium S.aureus and the yeast C.albicans. This chain is Brevinin-1PLb, found in Lithobates palustris (Pickerel frog).